Here is a 272-residue protein sequence, read N- to C-terminus: Leucoagglutinating phytohemagglutinin (272 aa).

An N-terminal signal peptide occupies residues 1-20 (MASSKFFTVLFLVLLTHANS). N-linked (GlcNAc...) (high mannose) asparagine glycosylation occurs at Asn32. Residue Asn80 is glycosylated (N-linked (GlcNAc...) (complex) asparagine).

Belongs to the leguminous lectin family. Homotetramer. In terms of processing, N-glycosylated on Asn-80; contains xylose.

Its function is as follows. This insecticidal carbohydrate-binding lectin is toxic for the cowpea weevil. In Phaseolus vulgaris (Kidney bean), this protein is Leucoagglutinating phytohemagglutinin (DLEC2).